The following is a 246-amino-acid chain: Ubiquinone biosynthesis O-methyltransferase (246 aa).

S-adenosyl-L-methionine contacts are provided by Arg36, Gly60, Asp81, and Leu123.

It belongs to the methyltransferase superfamily. UbiG/COQ3 family.

It carries out the reaction a 3-demethylubiquinol + S-adenosyl-L-methionine = a ubiquinol + S-adenosyl-L-homocysteine + H(+). The enzyme catalyses a 3-(all-trans-polyprenyl)benzene-1,2-diol + S-adenosyl-L-methionine = a 2-methoxy-6-(all-trans-polyprenyl)phenol + S-adenosyl-L-homocysteine + H(+). Its pathway is cofactor biosynthesis; ubiquinone biosynthesis. Its function is as follows. O-methyltransferase that catalyzes the 2 O-methylation steps in the ubiquinone biosynthetic pathway. The sequence is that of Ubiquinone biosynthesis O-methyltransferase from Rickettsia typhi (strain ATCC VR-144 / Wilmington).